The primary structure comprises 231 residues: Large ribosomal subunit protein uL1 (231 aa).

This sequence belongs to the universal ribosomal protein uL1 family. In terms of assembly, part of the 50S ribosomal subunit.

Functionally, binds directly to 23S rRNA. The L1 stalk is quite mobile in the ribosome, and is involved in E site tRNA release. Its function is as follows. Protein L1 is also a translational repressor protein, it controls the translation of the L11 operon by binding to its mRNA. This Beijerinckia indica subsp. indica (strain ATCC 9039 / DSM 1715 / NCIMB 8712) protein is Large ribosomal subunit protein uL1.